The primary structure comprises 431 residues: Citrate synthase (431 aa).

Residues H306 and D364 contribute to the active site.

The protein belongs to the citrate synthase family.

It catalyses the reaction oxaloacetate + acetyl-CoA + H2O = citrate + CoA + H(+). It functions in the pathway carbohydrate metabolism; tricarboxylic acid cycle; isocitrate from oxaloacetate: step 1/2. The chain is Citrate synthase (gltA) from Bartonella henselae (strain ATCC 49882 / DSM 28221 / CCUG 30454 / Houston 1) (Rochalimaea henselae).